Reading from the N-terminus, the 143-residue chain is MNTPNPRVAKLADQIRVVVAETLERRVKDPRLGFVTITDVRLTGDSRDATLFWTAMGTDKEIAGTEAALESAKGMLRSTVGKRLKLRYAPTLTFVRDATPETAKSIEDALARAAASDAEIARRSQGAMPAGEADPYRHSDEEE.

The interval 117–143 (DAEIARRSQGAMPAGEADPYRHSDEEE) is disordered. The span at 134 to 143 (DPYRHSDEEE) shows a compositional bias: basic and acidic residues.

This sequence belongs to the RbfA family. Monomer. Binds 30S ribosomal subunits, but not 50S ribosomal subunits or 70S ribosomes.

It is found in the cytoplasm. In terms of biological role, one of several proteins that assist in the late maturation steps of the functional core of the 30S ribosomal subunit. Associates with free 30S ribosomal subunits (but not with 30S subunits that are part of 70S ribosomes or polysomes). Required for efficient processing of 16S rRNA. May interact with the 5'-terminal helix region of 16S rRNA. The sequence is that of Ribosome-binding factor A from Cutibacterium acnes (strain DSM 16379 / KPA171202) (Propionibacterium acnes).